A 155-amino-acid polypeptide reads, in one-letter code: Small ribosomal subunit protein uS9 (155 aa).

It belongs to the universal ribosomal protein uS9 family.

This is Small ribosomal subunit protein uS9 from Rhizobium meliloti (strain 1021) (Ensifer meliloti).